The chain runs to 42 residues: Photosystem II reaction center protein J (42 aa).

Residues 10–30 (IPLWLVGTVVGTLALGLVALF) traverse the membrane as a helical segment.

Belongs to the PsbJ family. In terms of assembly, PSII is composed of 1 copy each of membrane proteins PsbA, PsbB, PsbC, PsbD, PsbE, PsbF, PsbH, PsbI, PsbJ, PsbK, PsbL, PsbM, PsbT, PsbX, PsbY, PsbZ, Psb30/Ycf12, at least 3 peripheral proteins of the oxygen-evolving complex and a large number of cofactors. It forms dimeric complexes.

Its subcellular location is the plastid. The protein resides in the chloroplast thylakoid membrane. In terms of biological role, one of the components of the core complex of photosystem II (PSII). PSII is a light-driven water:plastoquinone oxidoreductase that uses light energy to abstract electrons from H(2)O, generating O(2) and a proton gradient subsequently used for ATP formation. It consists of a core antenna complex that captures photons, and an electron transfer chain that converts photonic excitation into a charge separation. This is Photosystem II reaction center protein J from Oltmannsiellopsis viridis (Marine flagellate).